The following is a 228-amino-acid chain: Flagellar L-ring protein (228 aa).

A signal peptide spans 1–17 (MHYLRYFAIAFLLLLSS). A lipid anchor (N-palmitoyl cysteine) is attached at cysteine 18. The S-diacylglycerol cysteine moiety is linked to residue cysteine 18.

It belongs to the FlgH family. The basal body constitutes a major portion of the flagellar organelle and consists of four rings (L,P,S, and M) mounted on a central rod.

The protein localises to the cell membrane. The protein resides in the bacterial flagellum basal body. In terms of biological role, assembles around the rod to form the L-ring and probably protects the motor/basal body from shearing forces during rotation. The chain is Flagellar L-ring protein from Wigglesworthia glossinidia brevipalpis.